Here is a 542-residue protein sequence, read N- to C-terminus: Nif-specific regulatory protein (542 aa).

The region spanning 29–170 (DLSKTLREVL…MVANLIGQTV (142 aa)) is the GAF domain. Residues 203-432 (VIGISKAMQE…LENCVERTAT (230 aa)) enclose the Sigma-54 factor interaction domain. ATP contacts are provided by residues 231–238 (GESGTGKE) and 294–303 (AHGGTLFLDE). The inter-domain linker stretch occupies residues 433–499 (MMRGDLITEV…ATGAAPPTSE (67 aa)). 2 residues coordinate a divalent metal cation: Cys-446 and Cys-451. Positions 500–542 (RERLIWAMEQCGWVQAKAARALNISPRQMGYALQKFNIEVKKF) are C-terminal DNA-binding domain. Residues 514-533 (QAKAARALNISPRQMGYALQ) constitute a DNA-binding region (H-T-H motif).

In terms of assembly, interacts with sigma-54.

Functionally, required for activation of most nif operons, which are directly involved in nitrogen fixation. The polypeptide is Nif-specific regulatory protein (nifA) (Herbaspirillum seropedicae).